Here is a 506-residue protein sequence, read N- to C-terminus: NADH-quinone oxidoreductase subunit N 2 (506 aa).

The next 14 helical transmembrane spans lie at 11-31 (SLAYFAPELVLIAAALLLVVW), 44-64 (LVILSLAALACSGGLGAYFLA), 82-102 (FSNLFRVIFALVTGAIVLFLV), 117-137 (SGELFTLILVLSLGMNLMAAS), 140-160 (LLLIYLSLELVSVISFVLAGF), 175-195 (VIFGGVASGIMLYGMSWIFGI), 222-242 (VFVGTAFMLAGFGYKISAAPF), 254-274 (PTPVTAFLSVGPKAAGFAVLI), 289-309 (GVATPWPVLFGCLAMATMTVG), 323-345 (LAYSSIAHAGYMLLGFSVFSGAG), 356-376 (YCFMNLGAFMVVMAVAEESGG), 394-414 (AAAMAVFLVSLTGLPPTAGFI), 419-439 (LFSALLAAGGAWSWVIAVVGV), and 472-492 (LLGGTACALAIPTVLLGVYWG).

Belongs to the complex I subunit 2 family. As to quaternary structure, NDH-1 is composed of 14 different subunits. Subunits NuoA, H, J, K, L, M, N constitute the membrane sector of the complex.

The protein localises to the cell inner membrane. The enzyme catalyses a quinone + NADH + 5 H(+)(in) = a quinol + NAD(+) + 4 H(+)(out). Functionally, NDH-1 shuttles electrons from NADH, via FMN and iron-sulfur (Fe-S) centers, to quinones in the respiratory chain. The immediate electron acceptor for the enzyme in this species is believed to be ubiquinone. Couples the redox reaction to proton translocation (for every two electrons transferred, four hydrogen ions are translocated across the cytoplasmic membrane), and thus conserves the redox energy in a proton gradient. This chain is NADH-quinone oxidoreductase subunit N 2, found in Sorangium cellulosum (strain So ce56) (Polyangium cellulosum (strain So ce56)).